A 185-amino-acid chain; its full sequence is Transcription factor E (185 aa).

The 84-residue stretch at 5–88 (KNKELLEIAQ…YWRLETKKLP (84 aa)) folds into the HTH TFE/IIEalpha-type domain.

It belongs to the TFE family. As to quaternary structure, monomer. Interaction with RNA polymerase subunits RpoF and RpoE is necessary for Tfe stimulatory transcription activity. Able to interact with Tbp and RNA polymerase in the absence of DNA promoter. Interacts both with the preinitiation and elongation complexes.

In terms of biological role, transcription factor that plays a role in the activation of archaeal genes transcribed by RNA polymerase. Facilitates transcription initiation by enhancing TATA-box recognition by TATA-box-binding protein (Tbp), and transcription factor B (Tfb) and RNA polymerase recruitment. Not absolutely required for transcription in vitro, but particularly important in cases where Tbp or Tfb function is not optimal. It dynamically alters the nucleic acid-binding properties of RNA polymerases by stabilizing the initiation complex and destabilizing elongation complexes. Seems to translocate with the RNA polymerase following initiation and acts by binding to the non template strand of the transcription bubble in elongation complexes. In Thermococcus kodakarensis (strain ATCC BAA-918 / JCM 12380 / KOD1) (Pyrococcus kodakaraensis (strain KOD1)), this protein is Transcription factor E.